The following is a 180-amino-acid chain: Large ribosomal subunit protein eL20 (180 aa).

This sequence belongs to the eukaryotic ribosomal protein eL20 family.

The protein is Large ribosomal subunit protein eL20 of Caenorhabditis elegans.